The following is a 286-amino-acid chain: Polyamine aminopropyltransferase (286 aa).

One can recognise a PABS domain in the interval 5-238 (KIWHEKLHRH…GTMMFSWGTD (234 aa)). Spermidine-binding residues include His64 and Asp88. Residues Glu108 and 140-141 (NG) each bind S-methyl-5'-thioadenosine. Asp158 (proton acceptor) is an active-site residue. A spermidine-binding site is contributed by 158-161 (DSTD).

The protein belongs to the spermidine/spermine synthase family. In terms of assembly, homodimer or homotetramer.

The protein resides in the cytoplasm. The catalysed reaction is S-adenosyl 3-(methylsulfanyl)propylamine + putrescine = S-methyl-5'-thioadenosine + spermidine + H(+). It participates in amine and polyamine biosynthesis; spermidine biosynthesis; spermidine from putrescine: step 1/1. Its function is as follows. Catalyzes the irreversible transfer of a propylamine group from the amino donor S-adenosylmethioninamine (decarboxy-AdoMet) to putrescine (1,4-diaminobutane) to yield spermidine. In Buchnera aphidicola subsp. Schizaphis graminum (strain Sg), this protein is Polyamine aminopropyltransferase.